A 519-amino-acid chain; its full sequence is Transcription factor STP1 (519 aa).

The tract at residues 16-35 is i; it reads IPGKIYAFFRELVSGVIISK. Residues 47–61 are compositionally biased toward basic and acidic residues; it reads ATKEEGKDAADEEKT. 2 disordered regions span residues 47–69 and 115–150; these read ATKE…FPES and LLGS…EHST. Positions 65–97 are II; it reads LFPESNNIDRSLNGGCSVIPCSMDVSDLNTPIS. A compositionally biased stretch (low complexity) spans 131–146; sequence STGVTSSPLSPSGSTP. A C2H2-type 1 zinc finger spans residues 160–182; that stretch reads FICHYCDATFRIRGYLTRHIKKH. The C2H2-type 2; atypical zinc finger occupies 188–223; sequence YHCPFFNSATPPDLRCHNSGGFSRRDTYKTHLKARH. Residues 240 to 265 form a C2H2-type 3; atypical zinc finger; the sequence is GHCAQCGEYFSTIENFVENHIESGDC. The disordered stretch occupies residues 357 to 382; the sequence is IKKKQQQVSGSTVTTPEVATQNNQEV. A compositionally biased stretch (polar residues) spans 364–381; that stretch reads VSGSTVTTPEVATQNNQE.

Interacts (via Region II) with SSY5; protease component of the SPS-sensor. Phosphorylated by casein kinase I. Phosphorylation is not dependent on the extracellular amino acid levels, but is a prerequisite for proteolytic processing. In terms of processing, activated by the amino acid-induced proteolytic removal of an N-terminal inhibitory domain by serine protease SSY5, an intrinsic component of the SPS-sensor. Processing requires at least 2 components of the SCF(GRR1) ubiquitin ligase complex, namely the F-box protein GRR1 and the E2 enzyme CDC34, but does not depend on the proteasome. Processing is negatively regulated by the protein phosphatase 2A regulatory subunit RTS1.

It localises to the cell membrane. The protein resides in the nucleus. Functionally, transcription factor involved in the regulation of gene expression in response to extracellular amino acid levels. Synthesized as latent cytoplasmic precursor, which, upon a signal initiated by the plasma membrane SPS (SSY1-PTR3-SSY5) amino acid sensor system, becomes proteolytically activated and relocates to the nucleus, where it induces the expression of SPS-sensor-regulated genes, including the amino-acid permeases AGP1, BAP2, BAP3 and GNP1. Binding to promoters is facilitated by DAL81. Involved in the repression of genes subject to nitrogen catabolite repression and genes involved in stress response. Negatively regulated by inner nuclear membrane proteins ASI1, ASI2 and ASI3, which prevent unprocessed precursor forms that escape cytoplasmic anchoring from inducing SPS-sensor-regulated genes. May be involved in pre-tRNA splicing. The protein is Transcription factor STP1 (STP1) of Saccharomyces cerevisiae (strain RM11-1a) (Baker's yeast).